The chain runs to 227 residues: Small ribosomal subunit protein uS3 (227 aa).

Positions 24 to 94 constitute a KH type-2 domain; the sequence is LDEYLEEELG…RVSIEVKELP (71 aa). The tract at residues 207 to 227 is disordered; it reads EEVEDELKELIGKSEDEAEGA.

This sequence belongs to the universal ribosomal protein uS3 family. Part of the 30S ribosomal subunit.

Binds the lower part of the 30S subunit head. The polypeptide is Small ribosomal subunit protein uS3 (Methanopyrus kandleri (strain AV19 / DSM 6324 / JCM 9639 / NBRC 100938)).